The chain runs to 405 residues: Accessory Sec system protein translocase subunit SecY2 (405 aa).

Transmembrane regions (helical) follow at residues 14–34 (LFTL…LPFV), 63–83 (LSIF…WQMF), 104–124 (MYLT…RLPV), 131–151 (ILVV…LVWL), 156–176 (ASMG…LNIP), 191–211 (GIIV…ALMY), 247–267 (MYVM…GFIF), 285–305 (PLWV…FAFV), 343–363 (FSVI…LFVL), and 368–388 (LLRL…IFTI).

The protein belongs to the SecY/SEC61-alpha family. SecY2 subfamily. As to quaternary structure, component of the accessory SecA2/SecY2 protein translocase complex required to export cell wall proteins. May form heterotrimers with SecE and SecG subunits.

It localises to the cell membrane. In terms of biological role, part of the accessory SecA2/SecY2 system specifically required for export of possible cell wall proteins. The central subunit of a protein translocation channel. The protein is Accessory Sec system protein translocase subunit SecY2 of Streptococcus pneumoniae (strain CGSP14).